A 198-amino-acid polypeptide reads, in one-letter code: uncharacterized protein (198 aa).

It localises to the cytoplasm. This is an uncharacterized protein from Saccharomyces cerevisiae (strain ATCC 204508 / S288c) (Baker's yeast).